A 265-amino-acid polypeptide reads, in one-letter code: Arginine and glutamate-rich protein 1 (265 aa).

A compositionally biased stretch (basic residues) spans Met1–Ser54. The segment at Met1–Arg66 is necessary and sufficient for RNA binding. Positions Met1 to Arg106 are disordered. 2 stretches are compositionally biased toward basic and acidic residues: residues Ser60–Ile76 and Ser85–Arg106. Residues Ala67 to Asp265 form a necessary and sufficient for transcriptional regulation region. The short motif at Leu164–Leu168 is the LXXLL motif 1; degenerate element. The LXXLL motif 2; degenerate motif lies at Leu193–Leu197. Residues Arg229–Lys245 are compositionally biased toward basic and acidic residues. Positions Arg229–Asp265 are disordered.

Belongs to the ARGLU1 family.

The protein resides in the nucleus. Its subcellular location is the nucleus speckle. It localises to the chromosome. Its function is as follows. Dual function regulator of gene expression; regulator of transcription and modulator of alternative splicing. General coactivator of nuclear receptor-induced gene expression. This Xenopus tropicalis (Western clawed frog) protein is Arginine and glutamate-rich protein 1 (arglu1).